Reading from the N-terminus, the 413-residue chain is High zinc activated nuclear receptor protein (413 aa).

Positions 11-86 (LGNCKICLQR…EGMKIELVQL (76 aa)) form a DNA-binding region, nuclear receptor. 2 NR C4-type zinc fingers span residues 14-34 (CKIC…CRAC) and 50-69 (CKEK…CRSC). Residues 101-412 (SIDPLFTPNV…TSQCIVHTKN (312 aa)) are required for zinc-binding. The NR LBD domain maps to 135 to 396 (QMTSGYAMFL…VCCKNFKEDA (262 aa)).

It belongs to the nuclear hormone receptor family. Weakly expressed in intestinal cells in the absence of zinc supplementation. Upon zinc supplementation, accumulates in alimentary tract cells, and it is mainly expressed in the intestine.

It localises to the nucleus. The protein resides in the cytoplasm. Its function is as follows. Nuclear receptor transcription factor that binds to DNA enhancer elements to promote the transcription of genes required to maintain micronutrient homeostasis. Direct binding to its ligand zinc allows for nuclear accumulation and activation, which thereby induces the transcription of genes required to promote the storage and detoxification of excess dietary zinc. This in turn, allows for internal zinc levels to be detected and regulated. The chain is High zinc activated nuclear receptor protein from Caenorhabditis elegans.